A 250-amino-acid polypeptide reads, in one-letter code: Flavin-dependent thymidylate synthase (250 aa).

The ThyX domain occupies 7–233; sequence LSVELIACSS…PTVFGDFQVE (227 aa). DUMP is bound by residues 92 to 95, 103 to 107, and R172; these read ELVR and QLSQR. FAD is bound by residues 95–97 and Q103; that span reads RHR. Positions 95–105 match the ThyX motif motif; that stretch reads RHRHFSFSQLS. FAD-binding positions include 188–190 and H194; that span reads NFR. Position 199 (R199) interacts with dUMP. R199 (involved in ionization of N3 of dUMP, leading to its activation) is an active-site residue.

This sequence belongs to the thymidylate synthase ThyX family. In terms of assembly, homotetramer. FAD is required as a cofactor.

The catalysed reaction is dUMP + (6R)-5,10-methylene-5,6,7,8-tetrahydrofolate + NADPH + H(+) = dTMP + (6S)-5,6,7,8-tetrahydrofolate + NADP(+). Its pathway is pyrimidine metabolism; dTTP biosynthesis. Its function is as follows. Catalyzes the reductive methylation of 2'-deoxyuridine-5'-monophosphate (dUMP) to 2'-deoxythymidine-5'-monophosphate (dTMP) while utilizing 5,10-methylenetetrahydrofolate (mTHF) as the methyl donor, and NADPH and FADH(2) as the reductant. The polypeptide is Flavin-dependent thymidylate synthase (Corynebacterium efficiens (strain DSM 44549 / YS-314 / AJ 12310 / JCM 11189 / NBRC 100395)).